A 674-amino-acid polypeptide reads, in one-letter code: Putative kinase-like protein TMKL1 (674 aa).

A signal peptide spans 1 to 25 (MGMEALRFLHVIFFFVLILHCHCGT). Over 26–295 (SLSGSSDVKL…PLKPCLGSSR (270 aa)) the chain is Extracellular. N-linked (GlcNAc...) asparagine glycosylation is found at Asn-57, Asn-90, Asn-95, and Asn-110. LRR repeat units lie at residues 100 to 122 (HLLS…IGEF), 124 to 146 (MLQS…LGYT), 148 to 169 (SLSD…SIWN), and 173 to 194 (KLVS…PALP). N-linked (GlcNAc...) asparagine glycosylation is found at Asn-183 and Asn-195. LRR repeat units lie at residues 200-222 (NLQV…ITRF), 224-244 (GVKS…EGLG), and 247-269 (ELES…GESK). Residues Asn-252 and Asn-257 are each glycosylated (N-linked (GlcNAc...) asparagine). A helical transmembrane segment spans residues 296–323 (LSPGAVAGLVIGLMSGAVVVASLLIGYL). Over 324–674 (QNKKRKSSIE…ETRSDAETPF (351 aa)) the chain is Cytoplasmic. The tract at residues 331–350 (SIESEDDLEEGDEEDEIGEK) is disordered. Acidic residues predominate over residues 333 to 348 (ESEDDLEEGDEEDEIG). Residue Ser-334 is modified to Phosphoserine. In terms of domain architecture, Protein kinase spans 373 to 674 (NATGQVMEKT…ETRSDAETPF (302 aa)). Residue Thr-375 is modified to Phosphothreonine. Ser-454 carries the post-translational modification Phosphoserine. The segment at 649-674 (LEENRPRNRSALYSPTETRSDAETPF) is disordered.

The protein belongs to the protein kinase superfamily.

It is found in the membrane. Does not seem to have conserved a kinase activity. The protein is Putative kinase-like protein TMKL1 (TMKL1) of Arabidopsis thaliana (Mouse-ear cress).